Here is a 1028-residue protein sequence, read N- to C-terminus: Unconventional myosin-Ic-A (1028 aa).

At M1 the chain carries N-acetylmethionine. Residues 12 to 696 (GVQDFVLLEN…TLFATEDALE (685 aa)) form the Myosin motor domain. 105-112 (GESGSGKT) provides a ligand contact to ATP. At K348 the chain carries N6-methyllysine. The actin-binding stretch occupies residues 573 to 595 (LSKLMEILMSKEPSYVRCIKPND). IQ domains lie at 699-728 (KQGI…SAIN) and 722-751 (MKHS…AVDV). The TH1 domain occupies 850-1024 (KDNYPQSVPR…NGHLSVVAPR (175 aa)).

The protein belongs to the TRAFAC class myosin-kinesin ATPase superfamily. Myosin family. Interacts (via its IQ motifs) with calmodulin.

The protein resides in the cytoplasm. It localises to the cell membrane. Its subcellular location is the cell projection. The protein localises to the stereocilium membrane. In terms of biological role, myosins are actin-based motor molecules with ATPase activity. Unconventional myosins serve in intracellular movements. Their highly divergent tails are presumed to bind to membranous compartments, which would be moved relative to actin filaments. Involved in egg activation by coupling dynamic actin to membrane. The polypeptide is Unconventional myosin-Ic-A (myo1c-a) (Xenopus laevis (African clawed frog)).